The following is a 152-amino-acid chain: Acyl carrier protein, mitochondrial (152 aa).

Residues 73–148 enclose the Carrier domain; sequence KLINERVLLV…DIIKYVADKE (76 aa). Ser108 is subject to O-(pantetheine 4'-phosphoryl)serine.

Belongs to the acyl carrier protein (ACP) family. Complex I is composed of about 45 different subunits.

Its subcellular location is the mitochondrion. Carrier of the growing fatty acid chain in fatty acid biosynthesis. Accessory and non-catalytic subunit of the mitochondrial membrane respiratory chain NADH dehydrogenase (Complex I), which functions in the transfer of electrons from NADH to the respiratory chain. This is Acyl carrier protein, mitochondrial from Drosophila melanogaster (Fruit fly).